Reading from the N-terminus, the 626-residue chain is Phosphomethylpyrimidine synthase (626 aa).

The segment at 1–27 (MSKQEKAISLSESAQVDQQSVQPLPNS) is disordered. Residues 10 to 25 (LSESAQVDQQSVQPLP) show a composition bias toward polar residues. Substrate-binding positions include asparagine 232, methionine 261, tyrosine 290, histidine 326, 346–348 (SRG), 387–390 (DGLR), and glutamate 426. Position 430 (histidine 430) interacts with Zn(2+). Position 453 (tyrosine 453) interacts with substrate. Residue histidine 494 coordinates Zn(2+). [4Fe-4S] cluster contacts are provided by cysteine 574, cysteine 577, and cysteine 582.

It belongs to the ThiC family. In terms of assembly, homodimer. [4Fe-4S] cluster serves as cofactor.

The enzyme catalyses 5-amino-1-(5-phospho-beta-D-ribosyl)imidazole + S-adenosyl-L-methionine = 4-amino-2-methyl-5-(phosphooxymethyl)pyrimidine + CO + 5'-deoxyadenosine + formate + L-methionine + 3 H(+). It participates in cofactor biosynthesis; thiamine diphosphate biosynthesis. In terms of biological role, catalyzes the synthesis of the hydroxymethylpyrimidine phosphate (HMP-P) moiety of thiamine from aminoimidazole ribotide (AIR) in a radical S-adenosyl-L-methionine (SAM)-dependent reaction. The sequence is that of Phosphomethylpyrimidine synthase from Pseudomonas entomophila (strain L48).